Consider the following 587-residue polypeptide: Phosphomethylpyrimidine synthase (587 aa).

Residues asparagine 218, methionine 247, tyrosine 276, histidine 312, 332–334 (SRG), 373–376 (DGLR), and glutamate 412 contribute to the substrate site. Histidine 416 serves as a coordination point for Zn(2+). Tyrosine 439 provides a ligand contact to substrate. Histidine 480 contacts Zn(2+). The [4Fe-4S] cluster site is built by cysteine 560, cysteine 563, and cysteine 568.

It belongs to the ThiC family. [4Fe-4S] cluster serves as cofactor.

The enzyme catalyses 5-amino-1-(5-phospho-beta-D-ribosyl)imidazole + S-adenosyl-L-methionine = 4-amino-2-methyl-5-(phosphooxymethyl)pyrimidine + CO + 5'-deoxyadenosine + formate + L-methionine + 3 H(+). Its pathway is cofactor biosynthesis; thiamine diphosphate biosynthesis. Its function is as follows. Catalyzes the synthesis of the hydroxymethylpyrimidine phosphate (HMP-P) moiety of thiamine from aminoimidazole ribotide (AIR) in a radical S-adenosyl-L-methionine (SAM)-dependent reaction. In Porphyromonas gingivalis (strain ATCC BAA-308 / W83), this protein is Phosphomethylpyrimidine synthase.